Here is a 284-residue protein sequence, read N- to C-terminus: Pseudopaline exporter CntI (284 aa).

The next 10 membrane-spanning stretches (helical) occupy residues 2-22 (VLDLLKSGVLLAVLASFTFSV), 34-54 (LPAAEIVFFRSAIGTLLIYLL), 74-94 (GVMGALYLVCYFYAIAHIPLA), 96-116 (ASILAHMSPFFVILFSALFLG), 122-142 (AVYWLLLVVVLGALMIVKPFS), 147-167 (SVYAVVGLLSAVFAAGASVAI), 179-199 (IVFYFLAVATLVAIPLMWSDF), 209-229 (GLLLAIGVVSLLGQVFLTRAF), 236-256 (IVAVTRYIGIVFNAGWGWLFW), and 259-279 (VPDALTIAGGVLIVVACIALS). EamA domains are found at residues 8-138 (SGVL…LMIV) and 151-279 (VVGL…IALS).

Belongs to the EamA transporter family.

The protein resides in the cell inner membrane. In terms of biological role, transports the metallophore pseudopaline, which is involved in the acquisition of nickel and zinc, and thus enables bacterial growth inside the host, where metal access is limited. Is probably involved in the export of pseudopaline. The protein is Pseudopaline exporter CntI of Pseudomonas aeruginosa (strain UCBPP-PA14).